The following is a 400-amino-acid chain: Bifunctional enzyme IspD/IspF (400 aa).

A 2-C-methyl-D-erythritol 4-phosphate cytidylyltransferase region spans residues Met-1–Ile-244. Residues Arg-245 to Thr-400 are 2-C-methyl-D-erythritol 2,4-cyclodiphosphate synthase. Residues Asp-251 and His-253 each coordinate a divalent metal cation. Residues Asp-251–His-253 and His-277–Ser-278 contribute to the 4-CDP-2-C-methyl-D-erythritol 2-phosphate site. His-285 lines the a divalent metal cation pocket. 4-CDP-2-C-methyl-D-erythritol 2-phosphate contacts are provided by residues Asp-299 to Gly-301, Thr-375 to Glu-378, Phe-382, and Arg-385.

In the N-terminal section; belongs to the IspD/TarI cytidylyltransferase family. IspD subfamily. The protein in the C-terminal section; belongs to the IspF family. Requires a divalent metal cation as cofactor.

It carries out the reaction 2-C-methyl-D-erythritol 4-phosphate + CTP + H(+) = 4-CDP-2-C-methyl-D-erythritol + diphosphate. The enzyme catalyses 4-CDP-2-C-methyl-D-erythritol 2-phosphate = 2-C-methyl-D-erythritol 2,4-cyclic diphosphate + CMP. The protein operates within isoprenoid biosynthesis; isopentenyl diphosphate biosynthesis via DXP pathway; isopentenyl diphosphate from 1-deoxy-D-xylulose 5-phosphate: step 2/6. Its pathway is isoprenoid biosynthesis; isopentenyl diphosphate biosynthesis via DXP pathway; isopentenyl diphosphate from 1-deoxy-D-xylulose 5-phosphate: step 4/6. Bifunctional enzyme that catalyzes the formation of 4-diphosphocytidyl-2-C-methyl-D-erythritol from CTP and 2-C-methyl-D-erythritol 4-phosphate (MEP) (IspD), and catalyzes the conversion of 4-diphosphocytidyl-2-C-methyl-D-erythritol 2-phosphate (CDP-ME2P) to 2-C-methyl-D-erythritol 2,4-cyclodiphosphate (ME-CPP) with a corresponding release of cytidine 5-monophosphate (CMP) (IspF). The polypeptide is Bifunctional enzyme IspD/IspF (Dinoroseobacter shibae (strain DSM 16493 / NCIMB 14021 / DFL 12)).